A 186-amino-acid chain; its full sequence is Ribosome-recycling factor (186 aa).

It belongs to the RRF family.

It is found in the cytoplasm. Functionally, responsible for the release of ribosomes from messenger RNA at the termination of protein biosynthesis. May increase the efficiency of translation by recycling ribosomes from one round of translation to another. The polypeptide is Ribosome-recycling factor (Herminiimonas arsenicoxydans).